A 256-amino-acid polypeptide reads, in one-letter code: Probable serine/threonine-protein kinase YbdM (256 aa).

A Protein kinase domain is found at 25-256; it reads YKIEECLGMG…DLNRAIQSVT (232 aa). Residues 31-39 and lysine 54 contribute to the ATP site; that span reads LGMGGYGLV. The Proton acceptor role is filled by aspartate 149.

The protein belongs to the protein kinase superfamily. Ser/Thr protein kinase family.

The enzyme catalyses L-seryl-[protein] + ATP = O-phospho-L-seryl-[protein] + ADP + H(+). The catalysed reaction is L-threonyl-[protein] + ATP = O-phospho-L-threonyl-[protein] + ADP + H(+). This is Probable serine/threonine-protein kinase YbdM (ybdM) from Bacillus subtilis (strain 168).